Reading from the N-terminus, the 62-residue chain is Chromatin protein Cren7 1 (62 aa).

This sequence belongs to the Cren7 family. Monomer. Methylated at multiple sites, to varying extents.

Its subcellular location is the chromosome. The protein localises to the cytoplasm. Its function is as follows. A chromatin protein, binds double-stranded DNA without sequence specificity. Constrains negative DNA supercoils. In Hyperthermus butylicus (strain DSM 5456 / JCM 9403 / PLM1-5), this protein is Chromatin protein Cren7 1 (cren7-1).